A 215-amino-acid polypeptide reads, in one-letter code: Cytochrome b6 (215 aa).

A helical membrane pass occupies residues 32 to 52 (IFYCLGGITLTCFLVQVATGF). C35 lines the heme c pocket. Residues H86 and H100 each coordinate heme b. The next 3 membrane-spanning stretches (helical) occupy residues 90 to 110 (ASMMVLMMILHVFRVYLTGGF), 116 to 136 (LTWVTGVILAVLTVSFGVTGY), and 186 to 206 (LHTFILPLLTAVFMPMHFLMI). 2 residues coordinate heme b: H187 and H202.

The protein belongs to the cytochrome b family. PetB subfamily. As to quaternary structure, the 4 large subunits of the cytochrome b6-f complex are cytochrome b6, subunit IV (17 kDa polypeptide, PetD), cytochrome f and the Rieske protein, while the 4 small subunits are PetG, PetL, PetM and PetN. The complex functions as a dimer. Heme b is required as a cofactor. The cofactor is heme c.

The protein resides in the plastid. The protein localises to the chloroplast thylakoid membrane. Functionally, component of the cytochrome b6-f complex, which mediates electron transfer between photosystem II (PSII) and photosystem I (PSI), cyclic electron flow around PSI, and state transitions. This Pinus koraiensis (Korean pine) protein is Cytochrome b6.